The chain runs to 404 residues: Cysteine desulfurase IscS (404 aa).

Pyridoxal 5'-phosphate-binding positions include 75 to 76, N155, Q183, and 203 to 205; these read AT and SGH. K206 bears the N6-(pyridoxal phosphate)lysine mark. T243 contacts pyridoxal 5'-phosphate. The active-site Cysteine persulfide intermediate is the C328. Position 328 (C328) interacts with [2Fe-2S] cluster.

This sequence belongs to the class-V pyridoxal-phosphate-dependent aminotransferase family. NifS/IscS subfamily. Homodimer. Forms a heterotetramer with IscU, interacts with other sulfur acceptors. Pyridoxal 5'-phosphate is required as a cofactor.

The protein resides in the cytoplasm. The catalysed reaction is (sulfur carrier)-H + L-cysteine = (sulfur carrier)-SH + L-alanine. It participates in cofactor biosynthesis; iron-sulfur cluster biosynthesis. Functionally, master enzyme that delivers sulfur to a number of partners involved in Fe-S cluster assembly, tRNA modification or cofactor biosynthesis. Catalyzes the removal of elemental sulfur atoms from cysteine to produce alanine. Functions as a sulfur delivery protein for Fe-S cluster synthesis onto IscU, an Fe-S scaffold assembly protein, as well as other S acceptor proteins. The chain is Cysteine desulfurase IscS from Shewanella amazonensis (strain ATCC BAA-1098 / SB2B).